We begin with the raw amino-acid sequence, 102 residues long: Small ribosomal subunit protein uS10 (102 aa).

It belongs to the universal ribosomal protein uS10 family. Part of the 30S ribosomal subunit.

Functionally, involved in the binding of tRNA to the ribosomes. The sequence is that of Small ribosomal subunit protein uS10 from Shouchella clausii (strain KSM-K16) (Alkalihalobacillus clausii).